The primary structure comprises 869 residues: Probable beta-glucosidase F (869 aa).

An N-terminal signal peptide occupies residues 1–19; that stretch reads MRVLSAIALVASLVPSALS. 3 N-linked (GlcNAc...) asparagine glycosylation sites follow: asparagine 69, asparagine 77, and asparagine 261. Aspartate 289 is an active-site residue. Asparagine 332, asparagine 364, asparagine 399, asparagine 425, and asparagine 478 each carry an N-linked (GlcNAc...) asparagine glycan. The segment at 678–698 is disordered; it reads AYPPTRPPKGPTPTYPTTIPN. Residues 681-691 show a composition bias toward pro residues; sequence PTRPPKGPTPT. N-linked (GlcNAc...) asparagine glycosylation occurs at asparagine 728.

The protein belongs to the glycosyl hydrolase 3 family.

It is found in the secreted. The catalysed reaction is Hydrolysis of terminal, non-reducing beta-D-glucosyl residues with release of beta-D-glucose.. Its pathway is glycan metabolism; cellulose degradation. Functionally, beta-glucosidases are one of a number of cellulolytic enzymes involved in the degradation of cellulosic biomass. Catalyzes the last step releasing glucose from the inhibitory cellobiose. This chain is Probable beta-glucosidase F (bglF), found in Neosartorya fischeri (strain ATCC 1020 / DSM 3700 / CBS 544.65 / FGSC A1164 / JCM 1740 / NRRL 181 / WB 181) (Aspergillus fischerianus).